Reading from the N-terminus, the 242-residue chain is Probable derlin-1 homolog (242 aa).

Residues 1–18 (MDGVKEWFNSIPPVSRYM) lie on the Cytoplasmic side of the membrane. A helical transmembrane segment spans residues 19 to 39 (FAIFLGIPVLAAMHLISFNYL). The Lumenal segment spans residues 40–98 (YLDFTFTFKHFHLWRLITAPCIISSLGPMFLFNLIFFYQYTTRLESLNYAGKSDDYLFC). A helical membrane pass occupies residues 99–119 (IIFISICNIIFGLIFEYYFLG). Topologically, residues 120–140 (TMTIMSLIYIYSRMNPTGTSN) are cytoplasmic. The helical transmembrane segment at 141–161 (FYGFFSFKTIYLPWVFLVAHF) threads the bilayer. The Lumenal portion of the chain corresponds to 162-167 (LQTGHP). Residues 168–188 (PYSDFLAIVSGHIFFYLTDIY) traverse the membrane as a helical segment. Over 189 to 242 (PRANGVPALIKTPKFITNIFNKGDRNPNNVRRDPRTGRPIQEGGYNWGQGHALG) the chain is Cytoplasmic. The segment covering 214–224 (NPNNVRRDPRT) has biased composition (basic and acidic residues). Residues 214-242 (NPNNVRRDPRTGRPIQEGGYNWGQGHALG) form a disordered region. Positions 233 to 242 (YNWGQGHALG) are enriched in gly residues.

It belongs to the derlin family.

It localises to the endoplasmic reticulum membrane. Its function is as follows. May be involved in the degradation process of specific misfolded endoplasmic reticulum (ER) luminal proteins. May also involved in endoplasmic reticulum stress-induced pre-emptive quality control, a mechanism that selectively attenuates the translocation of newly synthesized proteins into the endoplasmic reticulum and reroutes them to the cytosol for proteasomal degradation. The polypeptide is Probable derlin-1 homolog (Dictyostelium discoideum (Social amoeba)).